Consider the following 272-residue polypeptide: Undecaprenyl-diphosphatase (272 aa).

Helical transmembrane passes span 6–26, 45–65, 89–109, 115–135, 156–176, 189–209, 221–241, and 251–271; these read SLLV…LPVS, AKTF…VMFW, LSLI…LVFH, LFNP…LIIA, AFFI…RSGA, YAAS…ATAL, ADLP…LVAI, and ISFI…FAVF.

Belongs to the UppP family.

The protein localises to the cell inner membrane. The catalysed reaction is di-trans,octa-cis-undecaprenyl diphosphate + H2O = di-trans,octa-cis-undecaprenyl phosphate + phosphate + H(+). Catalyzes the dephosphorylation of undecaprenyl diphosphate (UPP). Confers resistance to bacitracin. The polypeptide is Undecaprenyl-diphosphatase (Cronobacter sakazakii (strain ATCC BAA-894) (Enterobacter sakazakii)).